Consider the following 220-residue polypeptide: MTMNNQIQHKDSTKVPEPTLRRLPWYLSNVKLLKQKGERYVSSTQISKEINIDASQIAKDLSYVNISGRTRVGYEVDALIAVLEDFLGFTNMHKAFLFGVGSLGGALLRDSGLSHFGLEIVAAFDVNPSLVGTTLNGIPIFHSDDFQKKMQEYGVHIGVLTVPIEIAQCITDTMVAGGIKAVWNFTPFRIRVPEDIVVQNTSLYAHLAVMFNRLNFNEIE.

Residues 25–64 constitute a DNA-binding region (H-T-H motif); that stretch reads WYLSNVKLLKQKGERYVSSTQISKEINIDASQIAKDLSYV. 99–104 provides a ligand contact to NAD(+); sequence GVGSLG.

It belongs to the transcriptional regulatory Rex family. Homodimer.

Its subcellular location is the cytoplasm. Functionally, modulates transcription in response to changes in cellular NADH/NAD(+) redox state. The protein is Redox-sensing transcriptional repressor Rex of Bacteroides fragilis (strain ATCC 25285 / DSM 2151 / CCUG 4856 / JCM 11019 / LMG 10263 / NCTC 9343 / Onslow / VPI 2553 / EN-2).